A 643-amino-acid chain; its full sequence is Phosphomethylpyrimidine synthase (643 aa).

Substrate contacts are provided by residues asparagine 248, methionine 277, tyrosine 306, histidine 342, 362–364, 403–406, and glutamate 442; these read SRG and DGLR. Histidine 446 is a Zn(2+) binding site. Tyrosine 469 is a binding site for substrate. A Zn(2+)-binding site is contributed by histidine 510. Residues cysteine 590, cysteine 593, and cysteine 598 each coordinate [4Fe-4S] cluster.

This sequence belongs to the ThiC family. Homodimer. It depends on [4Fe-4S] cluster as a cofactor.

The catalysed reaction is 5-amino-1-(5-phospho-beta-D-ribosyl)imidazole + S-adenosyl-L-methionine = 4-amino-2-methyl-5-(phosphooxymethyl)pyrimidine + CO + 5'-deoxyadenosine + formate + L-methionine + 3 H(+). The protein operates within cofactor biosynthesis; thiamine diphosphate biosynthesis. Functionally, catalyzes the synthesis of the hydroxymethylpyrimidine phosphate (HMP-P) moiety of thiamine from aminoimidazole ribotide (AIR) in a radical S-adenosyl-L-methionine (SAM)-dependent reaction. The sequence is that of Phosphomethylpyrimidine synthase from Paraburkholderia phytofirmans (strain DSM 17436 / LMG 22146 / PsJN) (Burkholderia phytofirmans).